The following is a 566-amino-acid chain: CTP synthase (566 aa).

The interval 1–265 is amidoligase domain; sequence MTKYVFVTGG…DEIVCHKLNL (265 aa). S13 serves as a coordination point for CTP. UTP is bound at residue S13. ATP is bound by residues 14-19 and D71; that span reads SLGKGI. 2 residues coordinate Mg(2+): D71 and E139. Residues 146–148, 186–191, and K222 contribute to the CTP site; these read DIE and KTKPTQ. UTP-binding positions include 186–191 and K222; that span reads KTKPTQ. A Glutamine amidotransferase type-1 domain is found at 290–543; sequence EIALVGKYVD…IEAAAVFADK (254 aa). G351 lines the L-glutamine pocket. C378 acts as the Nucleophile; for glutamine hydrolysis in catalysis. L-glutamine is bound by residues 379-382, E402, and R469; that span reads LGMQ. Catalysis depends on residues H516 and E518. The disordered stretch occupies residues 545 to 566; it reads PSSEGAISADKPERTTTGAYIQ.

Belongs to the CTP synthase family. Homotetramer.

It catalyses the reaction UTP + L-glutamine + ATP + H2O = CTP + L-glutamate + ADP + phosphate + 2 H(+). The enzyme catalyses L-glutamine + H2O = L-glutamate + NH4(+). The catalysed reaction is UTP + NH4(+) + ATP = CTP + ADP + phosphate + 2 H(+). The protein operates within pyrimidine metabolism; CTP biosynthesis via de novo pathway; CTP from UDP: step 2/2. With respect to regulation, allosterically activated by GTP, when glutamine is the substrate; GTP has no effect on the reaction when ammonia is the substrate. The allosteric effector GTP functions by stabilizing the protein conformation that binds the tetrahedral intermediate(s) formed during glutamine hydrolysis. Inhibited by the product CTP, via allosteric rather than competitive inhibition. Functionally, catalyzes the ATP-dependent amination of UTP to CTP with either L-glutamine or ammonia as the source of nitrogen. Regulates intracellular CTP levels through interactions with the four ribonucleotide triphosphates. The chain is CTP synthase from Nitrosospira multiformis (strain ATCC 25196 / NCIMB 11849 / C 71).